Here is a 1261-residue protein sequence, read N- to C-terminus: Autism susceptibility gene 2 protein homolog (1261 aa).

6 disordered regions span residues 1–88, 105–236, 251–486, 505–545, 771–1023, and 1121–1148; these read MDGP…EDII, DVAV…DASS, LGVG…AGST, QSAD…FTPF, NSVF…PLAS, and REPHDYSHHHHHHHHPLAVDPRREHERG. Positions 8–17 are enriched in basic residues; that stretch reads HGLRKKRRSR. Residues 30 to 40 are compositionally biased toward gly residues; the sequence is LGTGAAGGIGA. The span at 105 to 118 shows a compositional bias: basic and acidic residues; sequence DVAVKPQERAEKRQ. The segment covering 136–147 has biased composition (basic residues); that stretch reads HSKKSRLSHSHH. Residues 148-158 show a composition bias toward basic and acidic residues; it reads YSSDRENDRNL. Over residues 177–192 the composition is skewed to polar residues; it reads PGQNSCRDSDSESASG. The segment covering 275 to 298 has biased composition (basic and acidic residues); the sequence is RSQEKSQDCCKEPVFEPVVLKDPH. The important for regulation of lamellipodia formation stretch occupies residues 288 to 471; that stretch reads VFEPVVLKDP…PTALPPPPPL (184 aa). 2 stretches are compositionally biased toward low complexity: residues 301-315 and 339-409; these read LPQLPSQAQAEPQLQ and QPAQ…SRSS. Residues 435-446 show a composition bias toward polar residues; the sequence is PNHSPLHSFTPT. The segment covering 526-539 has biased composition (basic residues); that stretch reads HQHQHQHTHQHTHQ. Residues 800 to 809 are compositionally biased toward pro residues; it reads PSFPTPPPWL. Residues 812–849 are compositionally biased toward basic and acidic residues; sequence GELERSASAAAHDRDRDVDKRDSSVSKDDKERESVEKR. Residues 868 to 879 are compositionally biased toward polar residues; that stretch reads NRSSTDPTTRGH. Composition is skewed to basic and acidic residues over residues 880–935 and 960–993; these read LNTE…EPKQ and REAEPRKGEPAYENPKKNAEVKVKEERKEDHDLP. Residues 1127–1136 show a composition bias toward basic residues; it reads SHHHHHHHHP. Phosphoserine is present on residues serine 1200 and serine 1235. The tract at residues 1201 to 1261 is disordered; it reads PTAGHQNGLL…SHTLKDIEAR (61 aa). The segment covering 1245-1261 has biased composition (basic and acidic residues); sequence EIRERPPSHTLKDIEAR.

It belongs to the AUTS2 family. Component of a PRC1-like complex that contains PCGF5, RNF2, CSNK2B, RYBP and AUTS2. Within this complex, interacts directly with PCGF5 and CSNK2B. Interacts with the histone acetyltransferase EP300/p300. Interacts (via Pro-rich region) with PREX1, DOCK1 and ELMO2. Detected in brain cortex in embryo, neonates and adults (at protein level). Detected in embryonic and adult Purkinje cells in the cerebellum. Detected in dorsal thalamus and in dopaminergic neurons in substantia nigra.

The protein resides in the nucleus. It is found in the cytoplasm. It localises to the cytoskeleton. The protein localises to the cell projection. Its subcellular location is the growth cone. Component of a Polycomb group (PcG) multiprotein PRC1-like complex, a complex class required to maintain the transcriptionally repressive state of many genes, including Hox genes, throughout development. PcG PRC1 complex acts via chromatin remodeling and modification of histones; it mediates monoubiquitination of histone H2A 'Lys-119', rendering chromatin heritably changed in its expressibility. The PRC1-like complex that contains PCGF5, RNF2, CSNK2B, RYBP and AUTS2 has decreased histone H2A ubiquitination activity, due to the phosphorylation of RNF2 by CSNK2B. As a consequence, the complex mediates transcriptional activation. In the cytoplasm, plays a role in axon and dendrite elongation and in neuronal migration during embryonic brain development. Promotes reorganization of the actin cytoskeleton, lamellipodia formation and neurite elongation via its interaction with RAC guanine nucleotide exchange factors, which then leads to the activation of RAC1. This is Autism susceptibility gene 2 protein homolog (Auts2) from Mus musculus (Mouse).